Consider the following 298-residue polypeptide: Beta-soluble NSF attachment protein (298 aa).

This sequence belongs to the SNAP family. Interacts with PRKCABP, and disrupts the interaction between GRIA2 and PRKCABP, leading to the internalization of GRIA2. In terms of tissue distribution, brain.

It is found in the membrane. Functionally, required for vesicular transport between the endoplasmic reticulum and the Golgi apparatus. The polypeptide is Beta-soluble NSF attachment protein (NAPB) (Bos taurus (Bovine)).